The sequence spans 447 residues: Tubulin beta-1 chain (447 aa).

Residues Gln-11, Glu-69, Ser-138, Gly-142, Thr-143, Gly-144, Asn-204, and Asn-226 each contribute to the GTP site. Glu-69 lines the Mg(2+) pocket. Polar residues predominate over residues 411 to 427; the sequence is AESNMNDLVSEYQQYQD. The tract at residues 411–447 is disordered; the sequence is AESNMNDLVSEYQQYQDATADEEGDYEDEEEQVPEDE. Residues 429–447 show a composition bias toward acidic residues; it reads TADEEGDYEDEEEQVPEDE.

This sequence belongs to the tubulin family. Dimer of alpha and beta chains. A typical microtubule is a hollow water-filled tube with an outer diameter of 25 nm and an inner diameter of 15 nM. Alpha-beta heterodimers associate head-to-tail to form protofilaments running lengthwise along the microtubule wall with the beta-tubulin subunit facing the microtubule plus end conferring a structural polarity. Microtubules usually have 13 protofilaments but different protofilament numbers can be found in some organisms and specialized cells. Mg(2+) is required as a cofactor. In terms of tissue distribution, expressed in leaf sheaths.

Its subcellular location is the cytoplasm. It localises to the cytoskeleton. In terms of biological role, tubulin is the major constituent of microtubules, a cylinder consisting of laterally associated linear protofilaments composed of alpha- and beta-tubulin heterodimers. Microtubules grow by the addition of GTP-tubulin dimers to the microtubule end, where a stabilizing cap forms. Below the cap, tubulin dimers are in GDP-bound state, owing to GTPase activity of alpha-tubulin. The chain is Tubulin beta-1 chain (TUBB1) from Oryza sativa subsp. japonica (Rice).